Consider the following 350-residue polypeptide: Nicotinate-nucleotide--dimethylbenzimidazole phosphoribosyltransferase (350 aa).

The active-site Proton acceptor is Glu317.

This sequence belongs to the CobT family.

It catalyses the reaction 5,6-dimethylbenzimidazole + nicotinate beta-D-ribonucleotide = alpha-ribazole 5'-phosphate + nicotinate + H(+). Its pathway is nucleoside biosynthesis; alpha-ribazole biosynthesis; alpha-ribazole from 5,6-dimethylbenzimidazole: step 1/2. In terms of biological role, catalyzes the synthesis of alpha-ribazole-5'-phosphate from nicotinate mononucleotide (NAMN) and 5,6-dimethylbenzimidazole (DMB). This chain is Nicotinate-nucleotide--dimethylbenzimidazole phosphoribosyltransferase, found in Shewanella sp. (strain W3-18-1).